A 175-amino-acid polypeptide reads, in one-letter code: MSKKAEPIVIGKFGAVHGIKGWLKVHSYTDDPESIFEYKPLLMKSKGQFQEVNIADWKRHSNGFVAKIVGFDVREEAQALVGLELLVDSDKLPNLEEDFYWRDLIGCQVKTDNGYDLGVVTEIMETGSNDVLVVKANSNDAFGQKERLIPFIDKQVISNVDITSKLIQVNWEPDF.

The region spanning 96–175 (EEDFYWRDLI…LIQVNWEPDF (80 aa)) is the PRC barrel domain.

The protein belongs to the RimM family. As to quaternary structure, binds ribosomal protein uS19.

The protein resides in the cytoplasm. Functionally, an accessory protein needed during the final step in the assembly of 30S ribosomal subunit, possibly for assembly of the head region. Essential for efficient processing of 16S rRNA. May be needed both before and after RbfA during the maturation of 16S rRNA. It has affinity for free ribosomal 30S subunits but not for 70S ribosomes. This chain is Ribosome maturation factor RimM, found in Psychromonas ingrahamii (strain DSM 17664 / CCUG 51855 / 37).